A 207-amino-acid polypeptide reads, in one-letter code: Large ribosomal subunit protein bL25 (207 aa).

This sequence belongs to the bacterial ribosomal protein bL25 family. CTC subfamily. In terms of assembly, part of the 50S ribosomal subunit; part of the 5S rRNA/L5/L18/L25 subcomplex. Contacts the 5S rRNA. Binds to the 5S rRNA independently of L5 and L18.

This is one of the proteins that binds to the 5S RNA in the ribosome where it forms part of the central protuberance. The polypeptide is Large ribosomal subunit protein bL25 (Brucella abortus (strain S19)).